We begin with the raw amino-acid sequence, 65 residues long: Hirudin-2 (65 aa).

Residues 1–3 (ITY) are interaction with thrombin active site. 3 disulfide bridges follow: cysteine 6/cysteine 14, cysteine 16/cysteine 28, and cysteine 22/cysteine 39. The segment at 39–65 (CVTGEGTPKPQSHNDGDFEEIPEEYLQ) is disordered. O-linked (GalNAc...) threonine glycosylation occurs at threonine 45. An interaction with fibrinogen-binding exosite of thrombin region spans residues 55–65 (DFEEIPEEYLQ). The span at 55–65 (DFEEIPEEYLQ) shows a compositional bias: acidic residues. Tyrosine 63 is subject to Sulfotyrosine.

This sequence belongs to the protease inhibitor I14 (hirudin) family.

Its subcellular location is the secreted. In terms of biological role, hirudin is a potent thrombin-specific protease inhibitor. It forms a stable non-covalent complex with alpha-thrombin, thereby abolishing its ability to cleave fibrinogen. The protein is Hirudin-2 of Hirudo medicinalis (Medicinal leech).